A 132-amino-acid polypeptide reads, in one-letter code: Small ribosomal subunit protein uS8c (132 aa).

It belongs to the universal ribosomal protein uS8 family. As to quaternary structure, part of the 30S ribosomal subunit.

The protein localises to the plastid. Its subcellular location is the chloroplast. Its function is as follows. One of the primary rRNA binding proteins, it binds directly to 16S rRNA central domain where it helps coordinate assembly of the platform of the 30S subunit. The sequence is that of Small ribosomal subunit protein uS8c (rps8) from Psilotum nudum (Whisk fern).